Consider the following 395-residue polypeptide: Capsid protein (395 aa).

Basic residues predominate over residues 1–41; that stretch reads MARKYAKRSKSRPRTARRSPKSRSRPRSRAPRRKAPSRPRI. The interval 1–51 is disordered; the sequence is MARKYAKRSKSRPRTARRSPKSRSRPRSRAPRRKAPSRPRIQRVNPVRRPM. The Nuclear localization signal signature appears at 2 to 9; sequence ARKYAKRS.

It localises to the host nucleus. Its subcellular location is the virion. Self-assembles to form the virion icosahedral capsid. This Chaetoceros setoense (Chaetoceros setoense DNA virus) protein is Capsid protein.